The primary structure comprises 149 residues: Transcriptional repressor NrdR (149 aa).

A zinc finger lies at 3–34 (CPFCFAVDTKVIDSRLVGEGSSVRRRRQCLVC). The 91-residue stretch at 49–139 (PRVVKSNDVR…VYRSFEDIKE (91 aa)) folds into the ATP-cone domain.

Belongs to the NrdR family. The cofactor is Zn(2+).

In terms of biological role, negatively regulates transcription of bacterial ribonucleotide reductase nrd genes and operons by binding to NrdR-boxes. The sequence is that of Transcriptional repressor NrdR from Shigella flexneri.